Reading from the N-terminus, the 467-residue chain is A-type ATP synthase subunit B (467 aa).

The segment at 95–114 (GKGQPRDHMPLPPPEDFRDV) is disordered.

It belongs to the ATPase alpha/beta chains family. As to quaternary structure, has multiple subunits with at least A(3), B(3), C, D, E, F, H, I and proteolipid K(x).

Its subcellular location is the cell membrane. Its function is as follows. Component of the A-type ATP synthase that produces ATP from ADP in the presence of a proton gradient across the membrane. The B chain is a regulatory subunit. The protein is A-type ATP synthase subunit B of Pyrobaculum aerophilum (strain ATCC 51768 / DSM 7523 / JCM 9630 / CIP 104966 / NBRC 100827 / IM2).